A 459-amino-acid chain; its full sequence is Cysteine--tRNA ligase (459 aa).

Cys-27 is a binding site for Zn(2+). A 'HIGH' region motif is present at residues 29 to 39 (ITVYDDCHIGH). Residues Cys-208, His-233, and Glu-237 each coordinate Zn(2+). The 'KMSKS' region signature appears at 265–269 (KMSKS). Lys-268 contributes to the ATP binding site.

It belongs to the class-I aminoacyl-tRNA synthetase family. Monomer. The cofactor is Zn(2+).

It localises to the cytoplasm. The catalysed reaction is tRNA(Cys) + L-cysteine + ATP = L-cysteinyl-tRNA(Cys) + AMP + diphosphate. In Francisella philomiragia subsp. philomiragia (strain ATCC 25017 / CCUG 19701 / FSC 153 / O#319-036), this protein is Cysteine--tRNA ligase.